The following is a 940-amino-acid chain: Isoleucine--tRNA ligase (940 aa).

The short motif at 58-68 (PYANGSIHIGH) is the 'HIGH' region element. Position 564 (Glu564) interacts with L-isoleucyl-5'-AMP. The 'KMSKS' region motif lies at 605 to 609 (KMSKS). An ATP-binding site is contributed by Lys608. Residues Cys903, Cys906, Cys923, and Cys926 each coordinate Zn(2+).

The protein belongs to the class-I aminoacyl-tRNA synthetase family. IleS type 1 subfamily. In terms of assembly, monomer. Requires Zn(2+) as cofactor.

It localises to the cytoplasm. It carries out the reaction tRNA(Ile) + L-isoleucine + ATP = L-isoleucyl-tRNA(Ile) + AMP + diphosphate. Its function is as follows. Catalyzes the attachment of isoleucine to tRNA(Ile). As IleRS can inadvertently accommodate and process structurally similar amino acids such as valine, to avoid such errors it has two additional distinct tRNA(Ile)-dependent editing activities. One activity is designated as 'pretransfer' editing and involves the hydrolysis of activated Val-AMP. The other activity is designated 'posttransfer' editing and involves deacylation of mischarged Val-tRNA(Ile). The polypeptide is Isoleucine--tRNA ligase (Shewanella amazonensis (strain ATCC BAA-1098 / SB2B)).